The sequence spans 321 residues: Ferredoxin--NADP reductase (321 aa).

7 residues coordinate FAD: glutamate 33, glutamine 41, tyrosine 46, valine 86, leucine 119, aspartate 277, and serine 318.

It belongs to the ferredoxin--NADP reductase type 2 family. As to quaternary structure, homodimer. FAD serves as cofactor.

The enzyme catalyses 2 reduced [2Fe-2S]-[ferredoxin] + NADP(+) + H(+) = 2 oxidized [2Fe-2S]-[ferredoxin] + NADPH. The protein is Ferredoxin--NADP reductase of Lactococcus lactis subsp. lactis (strain IL1403) (Streptococcus lactis).